We begin with the raw amino-acid sequence, 64 residues long: Makatoxin-1 (64 aa).

The region spanning 2–64 is the LCN-type CS-alpha/beta domain; that stretch reads RDAYIADSEN…VPIRISGSCR (63 aa). 4 disulfides stabilise this stretch: Cys12–Cys63, Cys16–Cys36, Cys22–Cys46, and Cys26–Cys48.

As to expression, expressed by the venom gland.

The protein localises to the secreted. Functionally, this protein markedly relaxes the rat carbachol-precontracted anococcygeus muscle. This relaxation is inhibited by the inhibitor of nitric oxide (NO) synthase, N-nitro-L-arginine methyl ester (L-NAME), suggesting that the response induced by this protein is NO-mediated. The protein is Makatoxin-1 of Olivierus martensii (Manchurian scorpion).